The following is a 268-amino-acid chain: Embryonic abundant protein USP87 (268 aa).

A signal peptide spans 1–22; sequence MEFAHLTVLSLFCLAFVGITAT. 5 tandem repeats follow at residues 50–55, 83–88, 101–106, 166–183, and 202–222. The tract at residues 50-106 is 3 X 6 AA approximate repeats; that stretch reads GKTNSLPIKSEELKQYSTLFFEHDLHPRKNFILGNTNSVGSIIRPFTKSRQGVTDSI. One can recognise a BURP domain in the interval 68–259; it reads LFFEHDLHPR…GNKAAAWVPN (192 aa). A 2 X approximate repeats region spans residues 166 to 222; it reads YVVEDVKKVGDNAVMCHRLNFEKVVFNCHQVRDTTAYVVSLVASDGTKTKALTVCHH. A glycan (N-linked (GlcNAc...) asparagine) is linked at N259.

As to expression, seed.

This Vicia faba (Broad bean) protein is Embryonic abundant protein USP87.